A 388-amino-acid polypeptide reads, in one-letter code: Galactokinase (388 aa).

33–36 lines the substrate pocket; the sequence is EHTD. ATP-binding positions include Ser-67 and 125 to 131; that span reads GAGLSSS. Positions 131 and 163 each coordinate Mg(2+). The active-site Proton acceptor is Asp-175. Residue Tyr-225 coordinates substrate.

It belongs to the GHMP kinase family. GalK subfamily.

The protein resides in the cytoplasm. The catalysed reaction is alpha-D-galactose + ATP = alpha-D-galactose 1-phosphate + ADP + H(+). The protein operates within carbohydrate metabolism; galactose metabolism. Its function is as follows. Catalyzes the transfer of the gamma-phosphate of ATP to D-galactose to form alpha-D-galactose-1-phosphate (Gal-1-P). The sequence is that of Galactokinase from Limosilactobacillus fermentum (strain NBRC 3956 / LMG 18251) (Lactobacillus fermentum).